The sequence spans 37 residues: Bacteriocin lactococcin MMFII (37 aa).

A disulfide bridge connects residues C9 and C14.

The protein resides in the secreted. Functionally, bacteriocin active against Listeria monocytogenes and Lactococcus cremoris. In Lactococcus lactis subsp. lactis (Streptococcus lactis), this protein is Bacteriocin lactococcin MMFII.